The primary structure comprises 239 residues: Octanoyl-[acyl-carrier-protein]:protein N-octanoyltransferase LIPT2, mitochondrial (239 aa).

A mitochondrion-targeting transit peptide spans 1–18 (MSVPVLRVRRLGLVGYAE). A BPL/LPL catalytic domain is found at 37–217 (GSPGGALLLC…AFEEEFQCQL (181 aa)). Substrate-binding positions include 81 to 88 (RGGLITFH), 147 to 149 (AIG), and 160 to 162 (GLA). The active-site Acyl-thioester intermediate is the Cys-178. Residues 220-239 (EQNPEQNPVQNRPDRDAGPL) are disordered.

This sequence belongs to the LipB family.

Its subcellular location is the mitochondrion. It carries out the reaction octanoyl-[ACP] + L-lysyl-[protein] = N(6)-octanoyl-L-lysyl-[protein] + holo-[ACP] + H(+). It participates in protein modification; protein lipoylation via endogenous pathway; protein N(6)-(lipoyl)lysine from octanoyl-[acyl-carrier-protein]: step 1/2. Catalyzes the transfer of endogenously produced octanoic acid from octanoyl-acyl-carrier-protein (octanoyl-ACP) onto the lipoyl domains of lipoate-dependent enzymes such as the protein H of the glycine cleavage system (GCSH). Lipoyl-ACP can also act as a substrate although octanoyl-ACP is likely to be the physiological substrate. This Xenopus tropicalis (Western clawed frog) protein is Octanoyl-[acyl-carrier-protein]:protein N-octanoyltransferase LIPT2, mitochondrial (lipt2).